We begin with the raw amino-acid sequence, 192 residues long: Peptidyl-tRNA hydrolase (192 aa).

A tRNA-binding site is contributed by Tyr-14. His-19 acts as the Proton acceptor in catalysis. Tyr-66 and Asn-68 together coordinate tRNA.

It belongs to the PTH family. As to quaternary structure, monomer.

Its subcellular location is the cytoplasm. It carries out the reaction an N-acyl-L-alpha-aminoacyl-tRNA + H2O = an N-acyl-L-amino acid + a tRNA + H(+). In terms of biological role, hydrolyzes ribosome-free peptidyl-tRNAs (with 1 or more amino acids incorporated), which drop off the ribosome during protein synthesis, or as a result of ribosome stalling. Its function is as follows. Catalyzes the release of premature peptidyl moieties from peptidyl-tRNA molecules trapped in stalled 50S ribosomal subunits, and thus maintains levels of free tRNAs and 50S ribosomes. This chain is Peptidyl-tRNA hydrolase, found in Coprothermobacter proteolyticus (strain ATCC 35245 / DSM 5265 / OCM 4 / BT).